A 350-amino-acid polypeptide reads, in one-letter code: Biotin synthase (350 aa).

One can recognise a Radical SAM core domain in the interval 41-268 (NEVQISRLLS…KSRVRLSAGR (228 aa)). [4Fe-4S] cluster contacts are provided by C56, C60, and C63. 4 residues coordinate [2Fe-2S] cluster: C100, C131, C191, and R263.

This sequence belongs to the radical SAM superfamily. Biotin synthase family. As to quaternary structure, homodimer. [4Fe-4S] cluster is required as a cofactor. Requires [2Fe-2S] cluster as cofactor.

It catalyses the reaction (4R,5S)-dethiobiotin + (sulfur carrier)-SH + 2 reduced [2Fe-2S]-[ferredoxin] + 2 S-adenosyl-L-methionine = (sulfur carrier)-H + biotin + 2 5'-deoxyadenosine + 2 L-methionine + 2 oxidized [2Fe-2S]-[ferredoxin]. It participates in cofactor biosynthesis; biotin biosynthesis; biotin from 7,8-diaminononanoate: step 2/2. Functionally, catalyzes the conversion of dethiobiotin (DTB) to biotin by the insertion of a sulfur atom into dethiobiotin via a radical-based mechanism. The protein is Biotin synthase of Shewanella halifaxensis (strain HAW-EB4).